We begin with the raw amino-acid sequence, 192 residues long: 3-hydroxyanthranilate 3,4-dioxygenase 1 (192 aa).

Arg-50 is a binding site for O2. The Fe cation site is built by His-54, Glu-60, and His-102. Glu-60 provides a ligand contact to substrate. Positions 106 and 116 each coordinate substrate. 4 residues coordinate a divalent metal cation: Cys-131, Cys-134, Cys-168, and Cys-171.

Belongs to the 3-HAO family. Fe(2+) is required as a cofactor.

It is found in the cytoplasm. It carries out the reaction 3-hydroxyanthranilate + O2 = (2Z,4Z)-2-amino-3-carboxymuconate 6-semialdehyde. The protein operates within cofactor biosynthesis; NAD(+) biosynthesis; quinolinate from L-kynurenine: step 3/3. Its function is as follows. Catalyzes the oxidative ring opening of 3-hydroxyanthranilate to 2-amino-3-carboxymuconate semialdehyde, which spontaneously cyclizes to quinolinate. The chain is 3-hydroxyanthranilate 3,4-dioxygenase 1 (bna1-1) from Aspergillus clavatus (strain ATCC 1007 / CBS 513.65 / DSM 816 / NCTC 3887 / NRRL 1 / QM 1276 / 107).